The chain runs to 219 residues: Large ribosomal subunit protein uL4 (219 aa).

The tract at residues 43-100 is disordered; that stretch reads AAKRQGTHSTKTRGEVSGGGKKPYRQKGTGRARQGSTRAPQFTGGGTVHGPQPRDYSQ.

Belongs to the universal ribosomal protein uL4 family. As to quaternary structure, part of the 50S ribosomal subunit.

Functionally, one of the primary rRNA binding proteins, this protein initially binds near the 5'-end of the 23S rRNA. It is important during the early stages of 50S assembly. It makes multiple contacts with different domains of the 23S rRNA in the assembled 50S subunit and ribosome. Its function is as follows. Forms part of the polypeptide exit tunnel. The chain is Large ribosomal subunit protein uL4 from Mycobacterium sp. (strain JLS).